We begin with the raw amino-acid sequence, 586 residues long: Adenine deaminase (586 aa).

This sequence belongs to the metallo-dependent hydrolases superfamily. Adenine deaminase family. Mn(2+) is required as a cofactor.

The catalysed reaction is adenine + H2O + H(+) = hypoxanthine + NH4(+). This is Adenine deaminase from Bdellovibrio bacteriovorus (strain ATCC 15356 / DSM 50701 / NCIMB 9529 / HD100).